A 314-amino-acid polypeptide reads, in one-letter code: tRNA pseudouridine synthase B (314 aa).

Asp-41 functions as the Nucleophile in the catalytic mechanism.

It belongs to the pseudouridine synthase TruB family. Type 1 subfamily.

It carries out the reaction uridine(55) in tRNA = pseudouridine(55) in tRNA. Its function is as follows. Responsible for synthesis of pseudouridine from uracil-55 in the psi GC loop of transfer RNAs. The chain is tRNA pseudouridine synthase B from Prochlorococcus marinus (strain NATL2A).